The primary structure comprises 487 residues: Argininosuccinate lyase (487 aa).

The protein belongs to the lyase 1 family. Argininosuccinate lyase subfamily.

The protein localises to the cytoplasm. It catalyses the reaction 2-(N(omega)-L-arginino)succinate = fumarate + L-arginine. It functions in the pathway amino-acid biosynthesis; L-arginine biosynthesis; L-arginine from L-ornithine and carbamoyl phosphate: step 3/3. The chain is Argininosuccinate lyase from Natranaerobius thermophilus (strain ATCC BAA-1301 / DSM 18059 / JW/NM-WN-LF).